The primary structure comprises 552 residues: Urocanate hydratase (552 aa).

NAD(+)-binding positions include Gly-49–Gly-50, Gln-127, Gly-173–Gly-175, Asp-193, Asn-239–Ala-240, Gln-260–His-264, Tyr-270–Ile-271, and Tyr-319. Cys-407 is a catalytic residue. Position 489 (Gly-489) interacts with NAD(+).

Belongs to the urocanase family. It depends on NAD(+) as a cofactor.

The protein localises to the cytoplasm. It carries out the reaction 4-imidazolone-5-propanoate = trans-urocanate + H2O. Its pathway is amino-acid degradation; L-histidine degradation into L-glutamate; N-formimidoyl-L-glutamate from L-histidine: step 2/3. Catalyzes the conversion of urocanate to 4-imidazolone-5-propionate. In Bacillus anthracis (strain CDC 684 / NRRL 3495), this protein is Urocanate hydratase.